The following is a 322-amino-acid chain: Lipoyl synthase (322 aa).

[4Fe-4S] cluster-binding residues include C61, C66, C72, C87, C91, C94, and S300. In terms of domain architecture, Radical SAM core spans W73–L289.

It belongs to the radical SAM superfamily. Lipoyl synthase family. [4Fe-4S] cluster serves as cofactor.

The protein resides in the cytoplasm. It carries out the reaction [[Fe-S] cluster scaffold protein carrying a second [4Fe-4S](2+) cluster] + N(6)-octanoyl-L-lysyl-[protein] + 2 oxidized [2Fe-2S]-[ferredoxin] + 2 S-adenosyl-L-methionine + 4 H(+) = [[Fe-S] cluster scaffold protein] + N(6)-[(R)-dihydrolipoyl]-L-lysyl-[protein] + 4 Fe(3+) + 2 hydrogen sulfide + 2 5'-deoxyadenosine + 2 L-methionine + 2 reduced [2Fe-2S]-[ferredoxin]. Its pathway is protein modification; protein lipoylation via endogenous pathway; protein N(6)-(lipoyl)lysine from octanoyl-[acyl-carrier-protein]: step 2/2. In terms of biological role, catalyzes the radical-mediated insertion of two sulfur atoms into the C-6 and C-8 positions of the octanoyl moiety bound to the lipoyl domains of lipoate-dependent enzymes, thereby converting the octanoylated domains into lipoylated derivatives. This Rhizobium meliloti (strain 1021) (Ensifer meliloti) protein is Lipoyl synthase.